We begin with the raw amino-acid sequence, 241 residues long: MORN repeat-containing protein 3 (241 aa).

The interaction with MDM2 stretch occupies residues 6–35 (CPRKVEPPWKGWDRKAQKNGLRHQVFAVNG). MORN repeat units lie at residues 38–60 (YVGE…KSGA), 62–84 (YEGD…DPET), 91–113 (YSGW…PKEY), 114–136 (YEGE…NGDI), 137–159 (YEGQ…NGNR), 160–182 (YEGI…DHGQ), and 184–205 (FEGY…GRDE). The tract at residues 76–100 (SLSHPDPETGKLRRVYSGWWKGDKK) is interaction with SIRT1. Residues 206–240 (APEPTQFPIPKVEILDPDGVLKEALDKLMKPEEEE) are interaction with TP53.

Interacts with MEIG1. Interacts with TP53, MDM2 and SIRT1; the interactions mediate post-transcriptional modifications of TP53 by MDM2 and SIRT1. As to expression, expressed in testis (at protein level).

Its subcellular location is the cytoplasmic vesicle. The protein resides in the secretory vesicle. The protein localises to the acrosome. In terms of biological role, assembles a suppression complex (suppresome) by tethering SIRT1 and MDM2 to regulate composite modifications of p53/TP53. Confers both deacetylation-mediated functional inactivation, by SIRT1, and ubiquitination-dependent degradation, by MDM2, of p53/TP53, promoting a proliferative and cell survival behaviors. May play a role in the regulation of spermatogenesis. The protein is MORN repeat-containing protein 3 (Morn3) of Mus musculus (Mouse).